The following is a 1148-amino-acid chain: Replication factor C subunit 1 (1148 aa).

Residues 46-56 (NSSRKEDDFKQ) are compositionally biased toward basic and acidic residues. 2 disordered regions span residues 46–201 (NSSR…LNDE) and 228–380 (TLAM…TNYQ). Residue Lys-50 forms a Glycyl lysine isopeptide (Lys-Gly) (interchain with G-Cter in SUMO2) linkage. Position 67 is a phosphotyrosine (Tyr-67). A phosphoserine mark is found at Ser-69, Ser-71, Ser-73, and Ser-108. Thr-110 bears the Phosphothreonine mark. Residues 130–141 (RSTNSHLGTSNM) are compositionally biased toward polar residues. Ser-156 is modified (phosphoserine). 2 positions are modified to phosphothreonine: Thr-161 and Thr-163. 3 positions are modified to phosphoserine: Ser-164, Ser-173, and Ser-190. The segment covering 234–246 (EEPKTKKARKDTE) has biased composition (basic and acidic residues). Position 253 is a phosphoserine (Ser-253). Residues 262–271 (EKHKYPHKVK) are compositionally biased toward basic residues. Phosphoserine is present on residues Ser-281 and Ser-283. Residues 288 to 308 (SKYESSKESQQHSKSSADKIG) are compositionally biased toward basic and acidic residues. Ser-312 bears the Phosphoserine mark. 2 stretches are compositionally biased toward basic and acidic residues: residues 323–353 (KRKE…ETKT) and 362–376 (AKKE…EKKR). The residue at position 368 (Ser-368) is a Phosphoserine. One can recognise a BRCT domain in the interval 402 to 492 (GAENCLEGLI…PGKKSKYEIA (91 aa)). Basic and acidic residues-rich tracts occupy residues 496–507 (EMKKESKLERTP) and 520–538 (SKKE…RDSL). The interval 496 to 538 (EMKKESKLERTPQKNVQGKRKISPSKKESESKKSRPTSKRDSL) is disordered. Ser-537 carries the phosphoserine modification. Residue 650–657 (SGPPGVGK) participates in ATP binding. Residues 1081-1148 (KASRHSTSPS…RKGKGKSSKK (68 aa)) form a disordered region. Residues 1094-1105 (EYNEELNEDDSQ) are compositionally biased toward acidic residues. Phosphoserine is present on residues Ser-1104 and Ser-1106. Positions 1120–1124 (IKKKT) match the Nuclear localization signal motif. The segment covering 1130–1140 (SKPEKDKEPRK) has biased composition (basic and acidic residues).

The protein belongs to the activator 1 large subunit family. Large subunit of the RFC complex, an heteropentameric complex consisting of RFC1 and four small subunits RFC2, RFC3, RFC4 and RFC5; the RFC complex interacts with PCNA and the interaction involves RFC1. As to expression, wide tissue distribution. Undetectable in placental tissue.

It localises to the nucleus. Its function is as follows. Subunit of the replication factor C (RFC) complex which acts during elongation of primed DNA templates by DNA polymerases delta and epsilon, and is necessary for ATP-dependent loading of proliferating cell nuclear antigen (PCNA) onto primed DNA. This subunit binds to the primer-template junction. Binds the PO-B transcription element as well as other GA rich DNA sequences. Can bind single- or double-stranded DNA. This is Replication factor C subunit 1 (RFC1) from Homo sapiens (Human).